A 492-amino-acid chain; its full sequence is MANYFNTLNLRQQLDQLGKCRFMGRDEFADEASYLKGKKVVIVGCGAQGLNQGLNMRDSGLDIAYALRAEAIAEKRASWRKATENGFTVGTYEDLIPQADLIVNLTPDKQHSAVVQAVQPLMKQGAALGYSHGFNIVEVGEQIRKDITVVMVAPKCPGTEVREEYKRGFGVPTLIAVHPENDPKGEGMAIAKAWAAATGGHRAGVLQSSFVAEVKSDLMGEQTILCGMLQAGSLLGFDKLVSEGTDPAYAEKLIQFGWETITEALKQGGITLMMDRLSNPAKLRAYALSEQLKGIMAPLFQKHMDDIISGEFSGGMMADWANDDVKLLTWREETGKTAFENAPQFDGKIAEQEYFDNGVLMVAMVKAGVELAFETMVSSGIIEESAYYESLHELPLIANTIARKRLYEMNVVISDTAEYGNYLFANAAVPLLKGAFMASLQPGDLGKAVAGTEVDNAQLRDVNEAIRNHPIETVGHTLRGYMKDMKRIAVAG.

A KARI N-terminal Rossmann domain is found at 14–208 (LDQLGKCRFM…GGHRAGVLQS (195 aa)). Residues 45–48 (CGAQ), Arg68, Arg76, Ser78, and 108–110 (DKQ) contribute to the NADP(+) site. His132 is an active-site residue. Gly158 is a binding site for NADP(+). 2 consecutive KARI C-terminal knotted domains span residues 209-344 (SFVA…NAPQ) and 345-485 (FDGK…MKDM). Positions 217, 221, 389, and 393 each coordinate Mg(2+). Ser414 is a binding site for substrate.

This sequence belongs to the ketol-acid reductoisomerase family. Mg(2+) is required as a cofactor.

The catalysed reaction is (2R)-2,3-dihydroxy-3-methylbutanoate + NADP(+) = (2S)-2-acetolactate + NADPH + H(+). It carries out the reaction (2R,3R)-2,3-dihydroxy-3-methylpentanoate + NADP(+) = (S)-2-ethyl-2-hydroxy-3-oxobutanoate + NADPH + H(+). It functions in the pathway amino-acid biosynthesis; L-isoleucine biosynthesis; L-isoleucine from 2-oxobutanoate: step 2/4. It participates in amino-acid biosynthesis; L-valine biosynthesis; L-valine from pyruvate: step 2/4. Involved in the biosynthesis of branched-chain amino acids (BCAA). Catalyzes an alkyl-migration followed by a ketol-acid reduction of (S)-2-acetolactate (S2AL) to yield (R)-2,3-dihydroxy-isovalerate. In the isomerase reaction, S2AL is rearranged via a Mg-dependent methyl migration to produce 3-hydroxy-3-methyl-2-ketobutyrate (HMKB). In the reductase reaction, this 2-ketoacid undergoes a metal-dependent reduction by NADPH to yield (R)-2,3-dihydroxy-isovalerate. In Pectobacterium atrosepticum (strain SCRI 1043 / ATCC BAA-672) (Erwinia carotovora subsp. atroseptica), this protein is Ketol-acid reductoisomerase (NADP(+)).